A 301-amino-acid chain; its full sequence is Probable 5-dehydro-4-deoxyglucarate dehydratase (301 aa).

It belongs to the DapA family.

The enzyme catalyses 5-dehydro-4-deoxy-D-glucarate + H(+) = 2,5-dioxopentanoate + CO2 + H2O. It participates in carbohydrate acid metabolism; D-glucarate degradation; 2,5-dioxopentanoate from D-glucarate: step 2/2. The sequence is that of Probable 5-dehydro-4-deoxyglucarate dehydratase from Xanthobacter autotrophicus (strain ATCC BAA-1158 / Py2).